The following is a 106-amino-acid chain: Adipokinetic hormone/corazonin-related peptide (106 aa).

A signal peptide spans 1–25 (MRNSIYKLIMFAVLCMVLTSSLSYA). A Pyrrolidone carboxylic acid modification is found at glutamine 26. Alanine 35 is subject to Alanine amide. The propeptide occupies 39–106 (SLAEAAQSTG…GLPLFSNGHL (68 aa)).

Belongs to the AKH/HRTH/RPCH family. In terms of tissue distribution, only expressed in the head and thorax body segments of adults. Is more expressed in adult males than in females.

The protein resides in the secreted. In terms of biological role, neuropeptide with neuromodulator or neurotransmitter role that activates the adipokinetic hormone/corazonin-related peptide receptor (ACPR). May function in regulation of post-ecdysis activities. Does not activate the A.gambiae adipokinetic hormone (AKH) and corazonin (CRZ) receptors. This chain is Adipokinetic hormone/corazonin-related peptide, found in Aedes aegypti (Yellowfever mosquito).